Here is a 203-residue protein sequence, read N- to C-terminus: Holliday junction branch migration complex subunit RuvA (203 aa).

Residues 1-63 (MIGQLSGKVD…EEHIHLYGFL (63 aa)) form a domain I region. The tract at residues 64 to 142 (NLEEKIFFNL…KISSGSAIIK (79 aa)) is domain II. A flexible linker region spans residues 143 to 149 (ESLNIKH). The interval 150-203 (ITPVASNEVIKALVNLGFSRFEAQNAVQGIITQNPEISIDELIKTALKNRNSNF) is domain III.

The protein belongs to the RuvA family. In terms of assembly, homotetramer. Forms an RuvA(8)-RuvB(12)-Holliday junction (HJ) complex. HJ DNA is sandwiched between 2 RuvA tetramers; dsDNA enters through RuvA and exits via RuvB. An RuvB hexamer assembles on each DNA strand where it exits the tetramer. Each RuvB hexamer is contacted by two RuvA subunits (via domain III) on 2 adjacent RuvB subunits; this complex drives branch migration. In the full resolvosome a probable DNA-RuvA(4)-RuvB(12)-RuvC(2) complex forms which resolves the HJ.

The protein resides in the cytoplasm. In terms of biological role, the RuvA-RuvB-RuvC complex processes Holliday junction (HJ) DNA during genetic recombination and DNA repair, while the RuvA-RuvB complex plays an important role in the rescue of blocked DNA replication forks via replication fork reversal (RFR). RuvA specifically binds to HJ cruciform DNA, conferring on it an open structure. The RuvB hexamer acts as an ATP-dependent pump, pulling dsDNA into and through the RuvAB complex. HJ branch migration allows RuvC to scan DNA until it finds its consensus sequence, where it cleaves and resolves the cruciform DNA. In Rickettsia africae (strain ESF-5), this protein is Holliday junction branch migration complex subunit RuvA.